Consider the following 267-residue polypeptide: CD82 antigen (267 aa).

The Cytoplasmic portion of the chain corresponds to 1–11 (MGSACIKVTKY). The S-palmitoyl cysteine moiety is linked to residue Cys5. The helical transmembrane segment at 12–32 (FLFLFNLIFFILGAVILGFGV) threads the bilayer. Over 33–53 (WILADKSSFISVLQTSSSSLR) the chain is Extracellular. Residues 54-72 (MGAYVFIGVGAVTMLMGFL) traverse the membrane as a helical segment. Residues 73-83 (GCIGAVNEVRC) lie on the Cytoplasmic side of the membrane. Residue Cys74 is the site of S-palmitoyl cysteine attachment. A helical transmembrane segment spans residues 84–110 (LLGLYFAFLLLILIAQVTAGALFYFNM). Over 111-228 (GKLKQEMGGI…KVQAWLQENL (118 aa)) the chain is Extracellular. Residues Asn129, Asn157, and Asn198 are each glycosylated (N-linked (GlcNAc...) asparagine). The chain crosses the membrane as a helical span at residues 229-250 (GIILGVGVGVAIIELLGMVLSI). Residues 251–267 (CLCRHVHSEDYSKVPKY) lie on the Cytoplasmic side of the membrane.

This sequence belongs to the tetraspanin (TM4SF) family. As to quaternary structure, forms homooligomers. Interacts directly with IGSF8. Interacts with EGFR. Interacts with VEGFA and PDGFB. Interacts with ITGA4. Interacts with ITGA6; this interaction reduces ITGA6 cell surface expression. Interacts with ITGB1. Interacts with TLR4; this interaction inhibits TLR4-mediated signaling pathway. Interacts with TLR9. Interacts with PLAUR. Post-translationally, palmitoylated. Palmitoylation contributes to oligomerization and surface expression. As to expression, lymphoid specific.

It is found in the cell membrane. The protein localises to the cytoplasmic vesicle. Its subcellular location is the phagosome. Functionally, structural component of specialized membrane microdomains known as tetraspanin-enriched microdomains (TERMs), which act as platforms for receptor clustering and signaling. Participates thereby in diverse biological functions such as cell signal transduction, adhesion, migration and protein trafficking. Acts as a attenuator of EGF signaling, facilitating ligand-induced endocytosis of the receptor and its subsequent desensitization. Mechanistically, modulates ligand-induced ubiquitination and trafficking of EGFR via E3 ligase CBL phosphorylation by PKC. Increases cell-matrix adhesion by regulating the membrane organization of integrin alpha4/ITA4. Modulates adhesion and suppresses cell migration through other integrins such as the alpha6/ITGA6 and beta1/ITGB1. Decreases cell-associated plasminogen activation by interfering with the interaction between urokinase-type plasminogen activator/PLAU and its receptor PLAUR. Associates with CD4 or CD8 and delivers costimulatory signals for the TCR/CD3 pathway. Plays a role in TLR9 trafficking to acidified CpG-containing compartments by controlling interaction between TLR9 and VAMP3 and subsequent myddosome assembly. Inhibits LPS-induced inflammatory response by preventing binding of LPS to TLR4 on the cell surface. Plays a role in the activation of macrophages into anti-inflammatory phenotypes. Independently of Toll-like receptor (TLR) signaling, is recruited to pathogen-containing phagosomes prior to fusion with lysosomes and thereby participates in antigen presentation. Also acts to control angiogenesis and switch angiogenic milieu to quiescent state by binding and sequestering VEGFA and PDGFB to inhibit the signaling they trigger via their respective cell surface receptor. The sequence is that of CD82 antigen (CD82) from Homo sapiens (Human).